The primary structure comprises 163 residues: Probable ribosome biogenesis protein RLP24 (163 aa).

Belongs to the eukaryotic ribosomal protein eL24 family. In terms of assembly, associated with nucleolar and cytoplasmic pre-60S particles. At the end of biogenesis it dissociates from cytoplasmic pre-60S particles and is likely to be exchanged for its ribosomal homolog, RPL24.

Its subcellular location is the nucleus. The protein resides in the nucleolus. In terms of biological role, involved in the biogenesis of the 60S ribosomal subunit. Ensures the docking of GTPBP4/NOG1 to pre-60S particles. This Homo sapiens (Human) protein is Probable ribosome biogenesis protein RLP24 (RSL24D1).